A 53-amino-acid polypeptide reads, in one-letter code: Kunitz-type trypsin inhibitor alpha chain (53 aa).

The interval 33–53 is disordered; it reads GWGLPRRTGDESCPLNVKAVR.

This sequence belongs to the protease inhibitor I3 (leguminous Kunitz-type inhibitor) family. In terms of assembly, heterodimer of an alpha and a beta chain linked by a disulfide bond.

Inhibits trypsin with a Ki of 0.25 uM. Inhibits the trypsin-like proteases in midguts of larval H.armigera, S.exigua, and P.rapae. The chain is Kunitz-type trypsin inhibitor alpha chain from Albizia kalkora (Kalkora mimosa).